Reading from the N-terminus, the 178-residue chain is MEQFHGTTIVSVRRGDKVALGGDGQVTLGNIVMKGGAKKVRRIYNGKVMVGFAGGTADAFSLLDRFEAKLEKHQGNLTRAAVELAKDWRTDRMLRRLEAMLIAADATTTLVITGNGDVLDPEGGICAIGSGGAYAQAAAKALADNTELSPREIVEKSLEIAGDMCIYTNHNRVIETIE.

Residue threonine 7 is part of the active site. Na(+) is bound by residues glycine 162, cysteine 165, and threonine 168.

The protein belongs to the peptidase T1B family. HslV subfamily. In terms of assembly, a double ring-shaped homohexamer of HslV is capped on each side by a ring-shaped HslU homohexamer. The assembly of the HslU/HslV complex is dependent on binding of ATP.

The protein localises to the cytoplasm. It catalyses the reaction ATP-dependent cleavage of peptide bonds with broad specificity.. Its activity is regulated as follows. Allosterically activated by HslU binding. Its function is as follows. Protease subunit of a proteasome-like degradation complex believed to be a general protein degrading machinery. The polypeptide is ATP-dependent protease subunit HslV (Paraburkholderia xenovorans (strain LB400)).